Here is a 70-residue protein sequence, read N- to C-terminus: Large ribosomal subunit protein uL29 (70 aa).

It belongs to the universal ribosomal protein uL29 family.

The sequence is that of Large ribosomal subunit protein uL29 from Clostridium botulinum (strain Alaska E43 / Type E3).